Consider the following 396-residue polypeptide: uncharacterized protein (396 aa).

It belongs to the mycobacterial PPE family.

This is an uncharacterized protein from Mycobacterium tuberculosis (strain CDC 1551 / Oshkosh).